Consider the following 247-residue polypeptide: Probable 2-phosphosulfolactate phosphatase (247 aa).

The protein belongs to the ComB family. Mg(2+) is required as a cofactor.

The catalysed reaction is (2R)-O-phospho-3-sulfolactate + H2O = (2R)-3-sulfolactate + phosphate. This chain is Probable 2-phosphosulfolactate phosphatase, found in Clostridium perfringens (strain SM101 / Type A).